The primary structure comprises 448 residues: N-succinylarginine dihydrolase (448 aa).

Substrate-binding positions include 19–28 (AGLSSGNIAS), asparagine 110, and 137–138 (HR). Glutamate 174 is an active-site residue. A substrate-binding site is contributed by arginine 216. Histidine 252 is a catalytic residue. Positions 254 and 366 each coordinate substrate. Cysteine 372 (nucleophile) is an active-site residue.

This sequence belongs to the succinylarginine dihydrolase family. In terms of assembly, homodimer.

The catalysed reaction is N(2)-succinyl-L-arginine + 2 H2O + 2 H(+) = N(2)-succinyl-L-ornithine + 2 NH4(+) + CO2. It functions in the pathway amino-acid degradation; L-arginine degradation via AST pathway; L-glutamate and succinate from L-arginine: step 2/5. In terms of biological role, catalyzes the hydrolysis of N(2)-succinylarginine into N(2)-succinylornithine, ammonia and CO(2). This chain is N-succinylarginine dihydrolase, found in Legionella pneumophila (strain Corby).